The chain runs to 190 residues: Putative manganese efflux pump MntP (190 aa).

The next 6 helical transmembrane spans lie at 5-25 (ALLA…VATG), 41-61 (WHFG…GQGI), 64-84 (FVDA…GLKM), 105-125 (TSLI…GVTL), 127-147 (MLGL…LGLT), and 169-189 (ILGG…SGVF).

It belongs to the MntP (TC 9.B.29) family.

The protein localises to the cell inner membrane. Its function is as follows. Probably functions as a manganese efflux pump. The polypeptide is Putative manganese efflux pump MntP (Oleidesulfovibrio alaskensis (strain ATCC BAA-1058 / DSM 17464 / G20) (Desulfovibrio alaskensis)).